The sequence spans 504 residues: Maturase K (504 aa).

The protein belongs to the intron maturase 2 family. MatK subfamily.

Its subcellular location is the plastid. It localises to the chloroplast. In terms of biological role, usually encoded in the trnK tRNA gene intron. Probably assists in splicing its own and other chloroplast group II introns. In Pachira aquatica (Guiana chestnut), this protein is Maturase K.